Reading from the N-terminus, the 275-residue chain is Translation initiation factor 2 subunit alpha (275 aa).

The region spanning 12 to 83 is the S1 motif domain; sequence GEFVVATVKN…EKGHIDLSLK (72 aa).

Belongs to the eIF-2-alpha family. Heterotrimer composed of an alpha, a beta and a gamma chain.

EIF-2 functions in the early steps of protein synthesis by forming a ternary complex with GTP and initiator tRNA. This Thermococcus kodakarensis (strain ATCC BAA-918 / JCM 12380 / KOD1) (Pyrococcus kodakaraensis (strain KOD1)) protein is Translation initiation factor 2 subunit alpha.